The primary structure comprises 158 residues: Crossover junction endodeoxyribonuclease RuvC (158 aa).

Residues Asp7, Glu67, and Asp140 contribute to the active site. The Mg(2+) site is built by Asp7, Glu67, and Asp140.

This sequence belongs to the RuvC family. As to quaternary structure, homodimer which binds Holliday junction (HJ) DNA. The HJ becomes 2-fold symmetrical on binding to RuvC with unstacked arms; it has a different conformation from HJ DNA in complex with RuvA. In the full resolvosome a probable DNA-RuvA(4)-RuvB(12)-RuvC(2) complex forms which resolves the HJ. Mg(2+) is required as a cofactor.

Its subcellular location is the cytoplasm. It carries out the reaction Endonucleolytic cleavage at a junction such as a reciprocal single-stranded crossover between two homologous DNA duplexes (Holliday junction).. In terms of biological role, the RuvA-RuvB-RuvC complex processes Holliday junction (HJ) DNA during genetic recombination and DNA repair. Endonuclease that resolves HJ intermediates. Cleaves cruciform DNA by making single-stranded nicks across the HJ at symmetrical positions within the homologous arms, yielding a 5'-phosphate and a 3'-hydroxyl group; requires a central core of homology in the junction. The consensus cleavage sequence is 5'-(A/T)TT(C/G)-3'. Cleavage occurs on the 3'-side of the TT dinucleotide at the point of strand exchange. HJ branch migration catalyzed by RuvA-RuvB allows RuvC to scan DNA until it finds its consensus sequence, where it cleaves and resolves the cruciform DNA. This chain is Crossover junction endodeoxyribonuclease RuvC, found in Dictyoglomus thermophilum (strain ATCC 35947 / DSM 3960 / H-6-12).